A 466-amino-acid polypeptide reads, in one-letter code: Chromogranin-A (466 aa).

The signal sequence occupies residues 1-18 (MRSSAALALLLCAGQVFA). Cys-35 and Cys-56 are joined by a disulfide. Residues 91–443 (AQQQQQQQQQ…ANRRAEDQEL (353 aa)) are disordered. Residues 92–111 (QQQQQQQQQQQQQQQQQQQQ) are compositionally biased toward low complexity. Position 114 is a phosphoserine (Ser-114). Over residues 131-155 (KHGDAASEAPSKDTVEKREDSDKGQ) the composition is skewed to basic and acidic residues. The segment covering 177 to 213 (ESSMMGNSQSPGEDTANNTQSPTSLPSQEHGIPQTTE) has biased composition (polar residues). Ser-215 is modified (phosphoserine). Residues 233 to 247 (KEEEEEEKEEEEEEK) are compositionally biased toward acidic residues. Residues 248-259 (EEKAIAREKAGP) show a composition bias toward basic and acidic residues. Phosphoserine is present on residues Ser-288 and Ser-312. The span at 305-314 (GKGELEHSQQ) shows a compositional bias: basic and acidic residues. Position 332 is a glycine amide (Gly-332). A compositionally biased stretch (basic and acidic residues) spans 351 to 378 (RLSREWEDKRWSRMDQLAKELTAEKRLE). 2 positions are modified to phosphoserine: Ser-353 and Ser-386. Met-387 carries the post-translational modification Methionine sulfoxide. Positions 412–440 (SSREDSVEARGDFEEKKEEEGSANRRAED) are enriched in basic and acidic residues. A phosphoserine mark is found at Ser-413, Ser-417, and Ser-433. Ser-433 carries O-linked (Xyl...) (chondroitin sulfate) serine glycosylation. Pyrrolidone carboxylic acid is present on Gln-441. Ser-447 carries the post-translational modification Phosphoserine.

This sequence belongs to the chromogranin/secretogranin protein family. As to quaternary structure, self-interacts; self-assembly is promoted in vitro by chondroitin sulfate attachment which occurs at mildly acidic pH conditions. Interacts with SCG3; this interaction is optimal in conditions mimicking the lumenal milieu of the trans-Golgi network, i.e. pH 5.5 and 10 mM Ca(+2). Interacts with ITPR1 in the secretory granules. Post-translationally, O-glycosylated; contains chondroitin sulfate (CS). CS attachment is pH-dependent, being observed at mildly acidic conditions of pH 5 but not at neutral pH, and promotes self-assembly in vitro. As to expression, expressed in the brain and adrenal and pituitary glands.

The protein resides in the cytoplasmic vesicle. It is found in the secretory vesicle. Its subcellular location is the neuronal dense core vesicle. The protein localises to the secreted. Its function is as follows. Strongly inhibits glucose induced insulin release from the pancreas. Functionally, catestatin inhibits catecholamine release from chromaffin cells and noradrenergic neurons by acting as a non-competitive nicotinic cholinergic antagonist. Can induce mast cell migration, degranulation and production of cytokines and chemokines. In terms of biological role, serpinin regulates granule biogenesis in endocrine cells by up-regulating the transcription of protease nexin 1 (SERPINE2) via a cAMP-PKA-SP1 pathway. This leads to inhibition of granule protein degradation in the Golgi complex which in turn promotes granule formation. Serpinin and pGlu-serpinin can enhance both myocardial contractility (inotropy) and relaxation (lusitropy) and this cardio-stimulation requires a beta 1-adrenergic receptor/adenylate cyclase/cAMP/PKA pathway. The sequence is that of Chromogranin-A (Chga) from Rattus norvegicus (Rat).